The sequence spans 103 residues: Small ribosomal subunit protein uS10 (103 aa).

The protein belongs to the universal ribosomal protein uS10 family. Part of the 30S ribosomal subunit.

Its function is as follows. Involved in the binding of tRNA to the ribosomes. In Picrophilus torridus (strain ATCC 700027 / DSM 9790 / JCM 10055 / NBRC 100828 / KAW 2/3), this protein is Small ribosomal subunit protein uS10.